Consider the following 303-residue polypeptide: MDLDQWISKVKDGQHLLEDELQLLCEYVKEILIEESNVQPVNSPVTVCGDIHGQFHDLMKLFQTGGHVPETNYIFMGDFVDRGYNSLEVFTILLLLKARYPANITLLRGNHESRQLTQVYGFYDECQRKYGNANAWRYCTDVFDYLTLSAIIDGTVLCVHGGLSPDIRTIDQIRVIERNCEIPHEGPFCDLMWSDPEDIETWAVSPRGAGWLFGSRVTSEFNHINNLDLVCRAHQLVQEGLKYMFQDKGLVTVWSAPNYCYRCGNVASILSFNENMEREVKFFTETEENNQMRGPRTGVPYFL.

Zn(2+) contacts are provided by Asp-50, His-52, Asp-78, and Asn-110. His-111 acts as the Proton donor in catalysis. Positions 160 and 234 each coordinate Zn(2+).

The protein belongs to the PPP phosphatase family. PP-6 (PP-V) subfamily. In terms of assembly, interacts with PHYA and PHYB, mostly when they are phosphorylated and in Pfr forms. Zn(2+) serves as cofactor. Mostly expressed in flowers and stems.

Its subcellular location is the cytoplasm. It carries out the reaction O-phospho-L-seryl-[protein] + H2O = L-seryl-[protein] + phosphate. The enzyme catalyses O-phospho-L-threonyl-[protein] + H2O = L-threonyl-[protein] + phosphate. Its function is as follows. Catalytic subunit of protein phosphatase 6 (PP6). Dephosphorylates phosphorylated phytochromes, with a preference toward Pfr forms. Plays a major role in the photoperiodic control of flowering time in long days by modulating phytochrome signals in flowering time control. In Pisum sativum (Garden pea), this protein is Phytochrome-associated serine/threonine-protein phosphatase.